A 367-amino-acid chain; its full sequence is Undecaprenyl-phosphate alpha-N-acetylglucosaminyl 1-phosphate transferase (367 aa).

10 consecutive transmembrane segments (helical) span residues 3-23, 46-66, 69-89, 132-152, 158-178, 187-207, 213-233, 242-262, 294-314, and 318-338; these read LLTV…FLFF, LIPL…FGIV, YIPH…IGAL, VLGP…INAF, IDGL…MILW, IWCF…LGIL, VFMG…ILLE, ISPV…VAIM, AFVL…LAEY, and VPEW…GYCI.

The protein belongs to the glycosyltransferase 4 family. WecA subfamily. It depends on Mg(2+) as a cofactor. Mn(2+) serves as cofactor.

Its subcellular location is the cell inner membrane. It catalyses the reaction di-trans,octa-cis-undecaprenyl phosphate + UDP-N-acetyl-alpha-D-glucosamine = N-acetyl-alpha-D-glucosaminyl-di-trans,octa-cis-undecaprenyl diphosphate + UMP. Its pathway is bacterial outer membrane biogenesis; LPS O-antigen biosynthesis. It participates in bacterial outer membrane biogenesis; enterobacterial common antigen biosynthesis. Functionally, catalyzes the transfer of the GlcNAc-1-phosphate moiety from UDP-GlcNAc onto the carrier lipid undecaprenyl phosphate (C55-P), yielding GlcNAc-pyrophosphoryl-undecaprenyl (GlcNAc-PP-C55). This Escherichia coli O6:H1 (strain CFT073 / ATCC 700928 / UPEC) protein is Undecaprenyl-phosphate alpha-N-acetylglucosaminyl 1-phosphate transferase.